The chain runs to 434 residues: Glutamyl-tRNA reductase (434 aa).

Substrate is bound by residues 52-55, serine 115, 120-122, and glutamine 126; these read TCNR and ETQ. The active-site Nucleophile is the cysteine 53. 195–200 lines the NADP(+) pocket; it reads GAGEMI.

The protein belongs to the glutamyl-tRNA reductase family. In terms of assembly, homodimer.

The enzyme catalyses (S)-4-amino-5-oxopentanoate + tRNA(Glu) + NADP(+) = L-glutamyl-tRNA(Glu) + NADPH + H(+). Its pathway is porphyrin-containing compound metabolism; protoporphyrin-IX biosynthesis; 5-aminolevulinate from L-glutamyl-tRNA(Glu): step 1/2. In terms of biological role, catalyzes the NADPH-dependent reduction of glutamyl-tRNA(Glu) to glutamate 1-semialdehyde (GSA). This chain is Glutamyl-tRNA reductase, found in Cupriavidus pinatubonensis (strain JMP 134 / LMG 1197) (Cupriavidus necator (strain JMP 134)).